A 263-amino-acid polypeptide reads, in one-letter code: H-2 class II histocompatibility antigen, A-U beta chain (263 aa).

A signal peptide spans 1-27 (MALQIPSLLLLAAVVVLMVLSSPGTEG). Residues 28-120 (GDSERHFVVQ…TEVPTSLRRL (93 aa)) are beta-1. Topologically, residues 28–224 (GDSERHFVVQ…RAQSESARSK (197 aa)) are extracellular. Intrachain disulfides connect C42-C104 and C143-C199. An N-linked (GlcNAc...) asparagine glycan is attached at N46. Residues 121 to 214 (EQPNVVISLS…SLKSPITVEW (94 aa)) form a beta-2 region. The Ig-like C1-type domain maps to 123 to 211 (PNVVISLSRT…EHPSLKSPIT (89 aa)). The connecting peptide stretch occupies residues 215 to 224 (RAQSESARSK). The helical transmembrane segment at 225–245 (MLSGIGGCVLGVIFLGLGLFI) threads the bilayer. The Cytoplasmic portion of the chain corresponds to 246-263 (RHRSQKGPRGPPPAGLLQ).

Belongs to the MHC class II family.

It is found in the membrane. The chain is H-2 class II histocompatibility antigen, A-U beta chain from Mus musculus (Mouse).